The following is a 395-amino-acid chain: MFPRVSTFLPLRPLSRHPLSSGSPETSAAAIMLLTVRHGTVRYRSSALLARTKNNIQRYFGTNSVICSKKDKQSVRTEETSKETSESQDSEKENTKKDLLGIIKGMKVELSTVNVRTTKPPKRRPLKSLEATLGRLRRATEYAPKKRIEPLSPELVAAASAVADSLPFDKQTTKSELLSQLQQHEEESRAQRDAKRPKISFSNIISDMKVARSATARVRSRPELRIQFDEGYDNYPGQEKTDDLKKRKNIFTGKRLNIFDMMAVTKEAPETDTSPSLWDVEFAKQLATVNEQPLQNGFEELIQWTKEGKLWEFPINNEAGFDDDGSEFHEHIFLEKHLESFPKQGPIRHFMELVTCGLSKNPYLSVKQKVEHIEWFRNYFNEKKDILKESNIQFN.

The N-terminal 65 residues, 1–65 (MFPRVSTFLP…IQRYFGTNSV (65 aa)), are a transit peptide targeting the mitochondrion. 2 disordered regions span residues 70–97 (KDKQ…NTKK) and 175–196 (SELL…DAKR). Over residues 183–196 (QHEEESRAQRDAKR) the composition is skewed to basic and acidic residues.

This sequence belongs to the mitochondrion-specific ribosomal protein mS31 family. Component of the mitochondrial small ribosomal subunit (mt-SSU). Mature mammalian 55S mitochondrial ribosomes consist of a small (28S) and a large (39S) subunit. The 28S small subunit contains a 12S ribosomal RNA (12S mt-rRNA) and 30 different proteins. The 39S large subunit contains a 16S rRNA (16S mt-rRNA), a copy of mitochondrial valine transfer RNA (mt-tRNA(Val)), which plays an integral structural role, and 52 different proteins.

It is found in the mitochondrion. This chain is Small ribosomal subunit protein mS31 (MRPS31), found in Homo sapiens (Human).